The chain runs to 826 residues: Ribonucleases P/MRP protein subunit POP1 (826 aa).

Disordered stretches follow at residues 1–24 (MATT…PRKI) and 49–91 (NKDF…SGGD). The Nuclear localization signal motif lies at 58–65 (KRRRTNSY). Residues 70–79 (AKKRNIKRQK) are compositionally biased toward basic residues.

In terms of assembly, component of nuclear RNase P and RNase MRP ribonucleoproteins. RNase P consists of a catalytic RNA moiety and different protein chains. Several subunits of RNase P are also part of the RNase MRP complex. RNase MRP consists of a catalytic RNA moiety and several protein subunits.

Its subcellular location is the nucleus. The protein localises to the nucleolus. Component of ribonuclease P, a ribonucleoprotein complex that generates mature tRNA molecules by cleaving their 5'-ends. Also a component of the MRP ribonuclease complex, which cleaves pre-rRNA sequences. Required for rRNA maturation, including 5.8S rRNA processing. The chain is Ribonucleases P/MRP protein subunit POP1 from Arabidopsis thaliana (Mouse-ear cress).